The primary structure comprises 41 residues: Large ribosomal subunit protein bL36 (41 aa).

The protein belongs to the bacterial ribosomal protein bL36 family.

The polypeptide is Large ribosomal subunit protein bL36 (Orientia tsutsugamushi (strain Boryong) (Rickettsia tsutsugamushi)).